The chain runs to 338 residues: Lipoate-protein ligase A (338 aa).

The BPL/LPL catalytic domain occupies 29 to 216; sequence PATQRVLFLW…AFFAHYGERV (188 aa). Residues arginine 71, 76–79, and lysine 134 contribute to the ATP site; that span reads GAVF. Lysine 134 contributes to the (R)-lipoate binding site.

This sequence belongs to the LplA family. Monomer.

The protein localises to the cytoplasm. The catalysed reaction is L-lysyl-[lipoyl-carrier protein] + (R)-lipoate + ATP = N(6)-[(R)-lipoyl]-L-lysyl-[lipoyl-carrier protein] + AMP + diphosphate + H(+). The protein operates within protein modification; protein lipoylation via exogenous pathway; protein N(6)-(lipoyl)lysine from lipoate: step 1/2. It functions in the pathway protein modification; protein lipoylation via exogenous pathway; protein N(6)-(lipoyl)lysine from lipoate: step 2/2. Its function is as follows. Catalyzes both the ATP-dependent activation of exogenously supplied lipoate to lipoyl-AMP and the transfer of the activated lipoyl onto the lipoyl domains of lipoate-dependent enzymes. The chain is Lipoate-protein ligase A from Shigella dysenteriae serotype 1 (strain Sd197).